A 91-amino-acid chain; its full sequence is Small ribosomal subunit protein bS20 (91 aa).

Belongs to the bacterial ribosomal protein bS20 family.

Its function is as follows. Binds directly to 16S ribosomal RNA. The polypeptide is Small ribosomal subunit protein bS20 (Wolinella succinogenes (strain ATCC 29543 / DSM 1740 / CCUG 13145 / JCM 31913 / LMG 7466 / NCTC 11488 / FDC 602W) (Vibrio succinogenes)).